The following is an 82-amino-acid chain: Histidine-rich protein (82 aa).

This is Histidine-rich protein from Plasmodium falciparum (isolate fcm17 / Senegal).